The primary structure comprises 182 residues: MAQKVILGAEDIRRTLARIAHEILERNQSSRDLVIIGMYTRGVPLANRLAENILRFEGLEIPVGTLDFSLYRDDLDSQRFHPTIKNTDIPFSINNKIVVLVDDVLFTGRSTRAAMDALIDYGRPKAIQLAVLVDRGHRELPVRADYIGKNIPSARDEKIKVRLTETDGQDEVLILDDEAGEV.

Positions 98–110 match the PRPP-binding motif; it reads VVLVDDVLFTGRS.

The protein belongs to the purine/pyrimidine phosphoribosyltransferase family. PyrR subfamily.

It catalyses the reaction UMP + diphosphate = 5-phospho-alpha-D-ribose 1-diphosphate + uracil. Regulates the transcription of the pyrimidine nucleotide (pyr) operon in response to exogenous pyrimidines. Functionally, also displays a weak uracil phosphoribosyltransferase activity which is not physiologically significant. The sequence is that of Bifunctional protein PyrR from Dehalococcoides mccartyi (strain ATCC BAA-2100 / JCM 16839 / KCTC 5957 / BAV1).